Here is a 41-residue protein sequence, read N- to C-terminus: uncharacterized protein (41 aa).

Residues 19–41 (NSTRNSSSSSRSSYSSRTTVFSL) are disordered.

This is an uncharacterized protein from Dictyostelium discoideum (Social amoeba).